We begin with the raw amino-acid sequence, 911 residues long: Gem-associated protein 4a (911 aa).

As to quaternary structure, component of the core survival motor neuron (SMN) complex composed of Smn, Gem2, Gem3, rig/Gem5 and one of 3 almost identical Gem4 paralogs encoded by Glos/Gem4a, Gem4b or Gem4c. Interacts with Smn; the interaction is probably indirect.

In terms of biological role, component of the survival motor neuron (SMN) complex that catalyzes the assembly of small nuclear ribonucleoproteins (snRNPs), the building blocks of the spliceosome, and thereby plays an important role in the splicing of cellular pre-mRNAs. One of 3 almost identical paralogs (Glos/Gem4a, Gem4b and Gem4c), resulting from a genomic triplication, that have some redundant function. Required for neuromuscular function and organismal viability. This chain is Gem-associated protein 4a, found in Drosophila melanogaster (Fruit fly).